The primary structure comprises 454 residues: Phosphoglucosamine mutase (454 aa).

Ser104 functions as the Phosphoserine intermediate in the catalytic mechanism. Positions 104, 241, 243, and 245 each coordinate Mg(2+). Ser104 is subject to Phosphoserine.

Belongs to the phosphohexose mutase family. Requires Mg(2+) as cofactor. Activated by phosphorylation.

The enzyme catalyses alpha-D-glucosamine 1-phosphate = D-glucosamine 6-phosphate. In terms of biological role, catalyzes the conversion of glucosamine-6-phosphate to glucosamine-1-phosphate. This Paenarthrobacter aurescens (strain TC1) protein is Phosphoglucosamine mutase.